The following is a 196-amino-acid chain: Ribonuclease HII (196 aa).

In terms of domain architecture, RNase H type-2 spans 13–196 (LLVAGVDEAG…SFSPLKKKLF (184 aa)). Residues D19, E20, and D111 each contribute to the a divalent metal cation site.

It belongs to the RNase HII family. Mn(2+) is required as a cofactor. The cofactor is Mg(2+).

The protein localises to the cytoplasm. The enzyme catalyses Endonucleolytic cleavage to 5'-phosphomonoester.. Its function is as follows. Endonuclease that specifically degrades the RNA of RNA-DNA hybrids. This chain is Ribonuclease HII (rnhB), found in Aquifex aeolicus (strain VF5).